A 131-amino-acid polypeptide reads, in one-letter code: Predicted GPI-anchored protein 26 (131 aa).

The first 18 residues, 1–18 (MHFSKIIAGSALSSVALA), serve as a signal peptide directing secretion. Residues Asn-22 and Asn-104 are each glycosylated (N-linked (GlcNAc...) asparagine). A lipid anchor (GPI-anchor amidated glycine) is attached at Gly-110. Residues 111–131 (AGSKNVASALVGVVAIAAAMM) constitute a propeptide, removed in mature form.

It is found in the cell membrane. In terms of biological role, GPI-anchored protein involved in proper cell wall integrity. Does not seem to be directly involved in the synthesis of the cell wall. Required for normal virulence in a mouse model of disseminated candidiasis. In Candida albicans (strain SC5314 / ATCC MYA-2876) (Yeast), this protein is Predicted GPI-anchored protein 26 (PGA26).